The primary structure comprises 550 residues: CTP synthase (550 aa).

Positions 1–271 (MTRYIFITGG…DAEVLDVFGM (271 aa)) are amidoligase domain. Ser-13 contributes to the CTP binding site. Ser-13 is a UTP binding site. Residue 14-19 (SLGKGL) coordinates ATP. Residue Tyr-54 coordinates L-glutamine. Position 71 (Asp-71) interacts with ATP. Mg(2+) is bound by residues Asp-71 and Glu-145. Residues 152-154 (DIE), 192-197 (KTKPTQ), and Lys-228 each bind CTP. UTP-binding positions include 192 to 197 (KTKPTQ) and Lys-228. The Glutamine amidotransferase type-1 domain occupies 297 to 549 (TIAVVGKYTV…IAAAKEHGRL (253 aa)). Position 361 (Gly-361) interacts with L-glutamine. Cys-388 acts as the Nucleophile; for glutamine hydrolysis in catalysis. L-glutamine-binding positions include 389-392 (FGMQ), Glu-412, and Arg-477. Residues His-522 and Glu-524 contribute to the active site.

Belongs to the CTP synthase family. In terms of assembly, homotetramer.

It carries out the reaction UTP + L-glutamine + ATP + H2O = CTP + L-glutamate + ADP + phosphate + 2 H(+). The enzyme catalyses L-glutamine + H2O = L-glutamate + NH4(+). The catalysed reaction is UTP + NH4(+) + ATP = CTP + ADP + phosphate + 2 H(+). Its pathway is pyrimidine metabolism; CTP biosynthesis via de novo pathway; CTP from UDP: step 2/2. With respect to regulation, allosterically activated by GTP, when glutamine is the substrate; GTP has no effect on the reaction when ammonia is the substrate. The allosteric effector GTP functions by stabilizing the protein conformation that binds the tetrahedral intermediate(s) formed during glutamine hydrolysis. Inhibited by the product CTP, via allosteric rather than competitive inhibition. Functionally, catalyzes the ATP-dependent amination of UTP to CTP with either L-glutamine or ammonia as the source of nitrogen. Regulates intracellular CTP levels through interactions with the four ribonucleotide triphosphates. The protein is CTP synthase of Caulobacter vibrioides (strain ATCC 19089 / CIP 103742 / CB 15) (Caulobacter crescentus).